We begin with the raw amino-acid sequence, 163 residues long: ATP synthase subunit b (163 aa).

The helical transmembrane segment at 13 to 33 threads the bilayer; sequence SFILFVWFCMKYIWPPIIFAI.

Belongs to the ATPase B chain family. F-type ATPases have 2 components, F(1) - the catalytic core - and F(0) - the membrane proton channel. F(1) has five subunits: alpha(3), beta(3), gamma(1), delta(1), epsilon(1). F(0) has three main subunits: a(1), b(2) and c(10-14). The alpha and beta chains form an alternating ring which encloses part of the gamma chain. F(1) is attached to F(0) by a central stalk formed by the gamma and epsilon chains, while a peripheral stalk is formed by the delta and b chains.

It localises to the cell membrane. In terms of biological role, f(1)F(0) ATP synthase produces ATP from ADP in the presence of a proton or sodium gradient. F-type ATPases consist of two structural domains, F(1) containing the extramembraneous catalytic core and F(0) containing the membrane proton channel, linked together by a central stalk and a peripheral stalk. During catalysis, ATP synthesis in the catalytic domain of F(1) is coupled via a rotary mechanism of the central stalk subunits to proton translocation. Component of the F(0) channel, it forms part of the peripheral stalk, linking F(1) to F(0). The chain is ATP synthase subunit b from Buchnera aphidicola subsp. Schizaphis graminum (strain Sg).